Consider the following 363-residue polypeptide: Dioxygenase sphC (363 aa).

The Fe cation site is built by H183, D185, and H259.

The protein belongs to the PhyH family. Homodimer. Requires Fe cation as cofactor.

It catalyses the reaction sphingofungin B1 + 2-oxoglutarate + O2 = sphingofungin B + succinate + CO2. Its pathway is secondary metabolite biosynthesis. Functionally, dioxygenase; part of the gene cluster that mediates the biosynthesis of sphingofungins, bioactive molecules acting as sphingolipid inhibitors via inhibiting serine palmitoyl transferase (SPT). Within the pathway, sphC catalyzes the hydrolxylation at C-4 to convert sphingofungin B1 into sphingofungin B as well as presphingofungin into sphingofungin B2. Sphingofungin biosynthesis starts with the PKS sphB that produces an C18 polyketide precursor 3-hydroxyoctadeca-4,10-dienoyl-ACP containing one delta-6 desaturation and one delta-12 desaturation. The aminoacyl transferase sphA uses the sphB product to produce 3-keto-presphingofungin by adding an aminomalonate molecule. SphF then reduces the C-3 ketone of 3-keto-presphingofungin which leads to presphingofungin. The cytochrome P450 monooxygenase sphH converts presphingofungin into sphingofungin B1 which is further converted to sphingofungin B by the dioxygenase sphC. SphC is also able to convert presphingofungin into sphingofungin B2. The acetyltransferase sphE acetylates sphingofungin B to produce sphingofungin C, but can also convert sphingofungin B1 into sphingofungin C1 and sphingofungin B2 into sphingofungin C2. Finally, sphingofungin C can be spontaneously converted into sphingofungin D. The protein is Dioxygenase sphC of Aspergillus fumigatus (strain CBS 144.89 / FGSC A1163 / CEA10) (Neosartorya fumigata).